A 483-amino-acid chain; its full sequence is FAD-dependent oxidoreductase oblC (483 aa).

The N-terminal stretch at 1–21 (MRSVTSLVSFSACLLASSVTA) is a signal peptide. N-linked (GlcNAc...) asparagine glycosylation is found at asparagine 100, asparagine 137, asparagine 190, and asparagine 240.

The protein belongs to the beta-cyclopiazonate dehydrogenase family. FAD serves as cofactor.

Its pathway is secondary metabolite biosynthesis; terpenoid biosynthesis. In terms of biological role, FAD-dependent oxidoreductase; part of the gene cluster that mediates the biosynthesis of the sesterterpenes ophiobolins, fungal phytotoxins with potential anti-cancer activities. The first step of the pathway is performed by the sesterterpene synthase oblA that possesses both prenyl transferase and terpene cyclase activity, converting isopentenyl diphosphate and dimethylallyl diphosphate into geranylfarnesyl diphosphate (GFPP) and further converting GFPP into ophiobolin F, respectively. Other sesterterpenoids (C(25) terpenoids) are found as minor products of oblA. The cytochrome P450 monooxygenase oblB then catalyzes a four-step oxidative transformation of ophiobolin F to yield ophiobolin C. The FAD-dependent oxidoreductase oblC might be involved in a later oxidation step that produces ophiobolin A. The sequence is that of FAD-dependent oxidoreductase oblC from Cochliobolus heterostrophus (strain C5 / ATCC 48332 / race O) (Southern corn leaf blight fungus).